We begin with the raw amino-acid sequence, 769 residues long: Phosphoribosylformylglycinamidine synthase subunit PurL (769 aa).

Residues 1–13 (MTGTPSAPTTSPD) show a composition bias toward polar residues. The interval 1–30 (MTGTPSAPTTSPDDQADGPGEGTVDRQPYR) is disordered. Histidine 65 is an active-site residue. Tyrosine 68 and lysine 109 together coordinate ATP. Glutamate 111 lines the Mg(2+) pocket. Residues 112–115 (SHNH) and arginine 134 contribute to the substrate site. Histidine 113 (proton acceptor) is an active-site residue. Aspartate 135 serves as a coordination point for Mg(2+). Glutamine 260 contributes to the substrate binding site. Aspartate 288 is a Mg(2+) binding site. 337–339 (ESQ) contacts substrate. ATP-binding residues include asparagine 524 and glycine 561. Asparagine 562 provides a ligand contact to Mg(2+). Position 564 (serine 564) interacts with substrate.

This sequence belongs to the FGAMS family. In terms of assembly, monomer. Part of the FGAM synthase complex composed of 1 PurL, 1 PurQ and 2 PurS subunits.

It is found in the cytoplasm. It carries out the reaction N(2)-formyl-N(1)-(5-phospho-beta-D-ribosyl)glycinamide + L-glutamine + ATP + H2O = 2-formamido-N(1)-(5-O-phospho-beta-D-ribosyl)acetamidine + L-glutamate + ADP + phosphate + H(+). Its pathway is purine metabolism; IMP biosynthesis via de novo pathway; 5-amino-1-(5-phospho-D-ribosyl)imidazole from N(2)-formyl-N(1)-(5-phospho-D-ribosyl)glycinamide: step 1/2. Part of the phosphoribosylformylglycinamidine synthase complex involved in the purines biosynthetic pathway. Catalyzes the ATP-dependent conversion of formylglycinamide ribonucleotide (FGAR) and glutamine to yield formylglycinamidine ribonucleotide (FGAM) and glutamate. The FGAM synthase complex is composed of three subunits. PurQ produces an ammonia molecule by converting glutamine to glutamate. PurL transfers the ammonia molecule to FGAR to form FGAM in an ATP-dependent manner. PurS interacts with PurQ and PurL and is thought to assist in the transfer of the ammonia molecule from PurQ to PurL. The chain is Phosphoribosylformylglycinamidine synthase subunit PurL from Parafrankia sp. (strain EAN1pec).